The sequence spans 344 residues: Protein pelota homolog (344 aa).

This sequence belongs to the eukaryotic release factor 1 family. Pelota subfamily. In terms of assembly, monomer. A divalent metal cation serves as cofactor.

It is found in the cytoplasm. Functionally, may function in recognizing stalled ribosomes, interact with stem-loop structures in stalled mRNA molecules, and effect endonucleolytic cleavage of the mRNA. May play a role in the release non-functional ribosomes and degradation of damaged mRNAs. Has endoribonuclease activity. The polypeptide is Protein pelota homolog (Saccharolobus islandicus (strain Y.N.15.51 / Yellowstone #2) (Sulfolobus islandicus)).